We begin with the raw amino-acid sequence, 141 residues long: MALLDVNALVALAWDSHIHHARIREWFTANATLGWATCPLTEAGFVRVSTNPKVLPSAIGIADARRVLVALRAVGGHRFLADDVSLVDDDVPLIVGYRQVTDAHLLTLARRRGVRLVTFDAGVFTLAQQRPKTPVELLTIL.

Residues D5 and D102 each coordinate Mg(2+).

The protein belongs to the PINc/VapC protein family. Requires Mg(2+) as cofactor.

Its subcellular location is the secreted. Its function is as follows. Toxic component of a type II toxin-antitoxin (TA) system. An RNase. Its cognate antitoxin is VapB38. This Mycobacterium tuberculosis (strain ATCC 25618 / H37Rv) protein is Ribonuclease VapC38.